A 227-amino-acid polypeptide reads, in one-letter code: YEATS domain-containing protein 4 (227 aa).

The 144-residue stretch at 15-158 (RVKGVTIVKP…AMMQQLLTTS (144 aa)) folds into the YEATS domain. A Glycyl lysine isopeptide (Lys-Gly) (interchain with G-Cter in SUMO2) cross-link involves residue Lys-37. Positions 93 to 97 (WGEFE) are diacetylated histone H3 binding. The interval 163 to 227 (LGAYKHETEF…LEEDDQTKDI (65 aa)) is interaction with MLLT10. Residues 168 to 227 (HETEFAELEVKTREKLEAAKKKTSFEIAELKERLKASRETINCLKNEIRKLEEDDQTKDI) form an interaction with TACC1 region. The stretch at 178–226 (KTREKLEAAKKKTSFEIAELKERLKASRETINCLKNEIRKLEEDDQTKD) forms a coiled coil.

Component of numerous complexes with chromatin remodeling and histone acetyltransferase activity. Component of the NuA4 histone acetyltransferase complex which contains the catalytic subunit KAT5/TIP60 and the subunits EP400, TRRAP/PAF400, BRD8/SMAP, EPC1, DMAP1/DNMAP1, RUVBL1/TIP49, RUVBL2, ING3, actin, ACTL6A/BAF53A, MORF4L1/MRG15, MORF4L2/MRGX, MRGBP, YEATS4/GAS41, VPS72/YL1 and MEAF6. The NuA4 complex interacts with MYC and the adenovirus E1A protein. Component of a NuA4-related complex which contains EP400, TRRAP/PAF400, SRCAP, BRD8/SMAP, EPC1, DMAP1/DNMAP1, RUVBL1/TIP49, RUVBL2, actin, ACTL6A/BAF53A, VPS72 and YEATS4/GAS41. Interacts with MLLT10/AF10. Also interacts with the SWI/SNF component SMARCB1/BAF47, TACC1 and TACC2, and the nuclear matrix protein NUMA1.

It is found in the nucleus. Chromatin reader component of the NuA4 histone acetyltransferase (HAT) complex, a complex involved in transcriptional activation of select genes principally by acetylation of nucleosomal histones H4 and H2A. Specifically recognizes and binds acylated histone H3, with a preference for histone H3 diacetylated at 'Lys-18' and 'Lys-27' (H3K18ac and H3K27ac) or histone H3 diacetylated at 'Lys-14' and 'Lys-27' (H3K14ac and H3K27ac). Also able to recognize and bind crotonylated histone H3. May also recognize and bind histone H3 succinylated at 'Lys-122' (H3K122succ); additional evidences are however required to confirm this result in vivo. Plays a key role in histone variant H2AZ1/H2A.Z deposition into specific chromatin regions: recognizes and binds H3K14ac and H3K27ac on the promoters of actively transcribed genes and recruits NuA4-related complex to deposit H2AZ1/H2A.Z. H2AZ1/H2A.Z deposition is required for maintenance of embryonic stem cell. The sequence is that of YEATS domain-containing protein 4 from Mus musculus (Mouse).